An 890-amino-acid polypeptide reads, in one-letter code: Protein FAM171A1 (890 aa).

The N-terminal stretch at 1–21 is a signal peptide; that stretch reads MSRSATLLLCLLGCHVWKAVT. Over 22-303 the chain is Extracellular; the sequence is KTLREPGAGA…VTQDITTYHT (282 aa). Residues N159, N190, and N194 are each glycosylated (N-linked (GlcNAc...) asparagine). A helical membrane pass occupies residues 304 to 324; it reads VFLLAILGGMAFILLVLLCLL. The Cytoplasmic segment spans residues 325 to 890; it reads LYYCRRKCLK…ERPLMAFNIK (566 aa). A phosphoserine mark is found at S358, S360, S371, S422, S443, and S525. Disordered stretches follow at residues 730–759 and 818–890; these read AGRN…RGDA and EGSS…FNIK. The segment covering 747-757 has biased composition (basic and acidic residues); the sequence is NEPKSARKGRG. Polar residues predominate over residues 822–833; sequence RRSGGQLPSLQE. Phosphoserine is present on residues S849 and S855. Acidic residues predominate over residues 858 to 869; the sequence is EEEEDDDDDDQG. Residues 870–883 show a composition bias toward basic and acidic residues; sequence EDKKSPWQKREERP.

This sequence belongs to the FAM171 family. In terms of assembly, interacts with ADAM10, NSG1 and OAZ1. Expressed in heart, brain, liver, skeletal muscle, kidney and pancreas. In brain, expressed by glia, pyramidal neurons and astrocytes (at protein level). Highly expressed in placental trophoblasts.

It localises to the cell membrane. Functionally, involved in the regulation of the cytoskeletal dynamics, plays a role in actin stress fiber formation. This is Protein FAM171A1 from Homo sapiens (Human).